A 114-amino-acid chain; its full sequence is MADTGYYAGYQDDVDVDEQKRHQALYLIGIILLVTVCLTVLWVCIMLACYVPGFLKKTLEAWLNSSSLMKRRVASTLTRTPFEATGPERERNWEARRQSTTVNPASQPNTGSVF.

Residues Leu27–Leu47 form a helical membrane-spanning segment. Positions Arg79–Phe114 are disordered. Residues Gly86 to Arg97 are compositionally biased toward basic and acidic residues. The segment covering Gln98 to Phe114 has biased composition (polar residues).

Belongs to the nanovirus movement protein family.

It is found in the host cell membrane. In terms of biological role, may transport viral genome to neighboring plant cells directly through plasmosdesmata, without any budding. The movement protein allows efficient cell to cell propagation, by bypassing the host cell wall barrier. The protein is Putative movement protein (DNA-M) of Faba bean necrotic yellows virus (isolate Egyptian EV1-93) (FBNYV).